The chain runs to 207 residues: Probable RNA 2'-phosphotransferase (207 aa).

The protein belongs to the KptA/TPT1 family.

In terms of biological role, removes the 2'-phosphate from RNA via an intermediate in which the phosphate is ADP-ribosylated by NAD followed by a presumed transesterification to release the RNA and generate ADP-ribose 1''-2''-cyclic phosphate (APPR&gt;P). May function as an ADP-ribosylase. In Methanosarcina mazei (strain ATCC BAA-159 / DSM 3647 / Goe1 / Go1 / JCM 11833 / OCM 88) (Methanosarcina frisia), this protein is Probable RNA 2'-phosphotransferase.